We begin with the raw amino-acid sequence, 342 residues long: Uroporphyrinogen decarboxylase (342 aa).

Residues 26–30 (RQAGR), Asp76, Tyr150, Ser205, and His321 each bind substrate.

Belongs to the uroporphyrinogen decarboxylase family. Homodimer.

Its subcellular location is the cytoplasm. The catalysed reaction is uroporphyrinogen III + 4 H(+) = coproporphyrinogen III + 4 CO2. Its pathway is porphyrin-containing compound metabolism; protoporphyrin-IX biosynthesis; coproporphyrinogen-III from 5-aminolevulinate: step 4/4. Its function is as follows. Catalyzes the decarboxylation of four acetate groups of uroporphyrinogen-III to yield coproporphyrinogen-III. In Sphingopyxis alaskensis (strain DSM 13593 / LMG 18877 / RB2256) (Sphingomonas alaskensis), this protein is Uroporphyrinogen decarboxylase.